A 317-amino-acid polypeptide reads, in one-letter code: MTQGKLSVANKAPGTEGQQHQANGEKKDAPAVPSAPPSYEEATSGEGLKAGTFPQGPTAVPLHPSWAYVDPSGSSGYEGGFPAGHHEHFTTFSWDDQKVRRLFIRKVYTILLVQLLVTLAVVALFTFCDVVKDYVQANPGWYWASYAVFFATYLTLACCSGPRRHFPWNLILLTIFTLSMAYLTGMLSSYYNTTSVLLCLVITALVCLSVTIFSFQTKFDFTSCQGVLFVLLMTLFFSGLLLAVLLPFQYVPWLHAVYAVLGAGVFTLFLAFDTQLLMGNRRHSLSPEEYIFGALNIYLDIIYIFTFFLQLFGTNRE.

The segment at 1–54 (MTQGKLSVANKAPGTEGQQHQANGEKKDAPAVPSAPPSYEEATSGEGLKAGTFP) is disordered. A run of 3 helical transmembrane segments spans residues 107 to 127 (VYTILLVQLLVTLAVVALFTF), 139 to 159 (PGWYWASYAVFFATYLTLACC), and 166 to 186 (FPWNLILLTIFTLSMAYLTGM). Asparagine 192 carries N-linked (GlcNAc...) asparagine glycosylation. 4 helical membrane-spanning segments follow: residues 195-215 (SVLLCLVITALVCLSVTIFSF), 226-246 (GVLFVLLMTLFFSGLLLAVLL), 252-272 (PWLHAVYAVLGAGVFTLFLAF), and 291-311 (IFGALNIYLDIIYIFTFFLQL).

It belongs to the BI1 family. LFG subfamily. Interacts with FAS/TNFRSF6 and BAX. In terms of tissue distribution, brain. Highly expressed in cerebellum, also found in cortex, olfactory bulb, and hippocampus.

It localises to the cell membrane. The protein localises to the membrane raft. The protein resides in the postsynaptic cell membrane. In terms of biological role, antiapoptotic protein which protects cells uniquely from Fas-induced apoptosis. Regulates Fas-mediated apoptosis in neurons by interfering with caspase-8 activation. Plays a role in cerebellar development by affecting cerebellar size, internal granular layer (IGL) thickness, and Purkinje cell (PC) development. In Mus musculus (Mouse), this protein is Protein lifeguard 2 (Faim2).